A 392-amino-acid polypeptide reads, in one-letter code: Homoserine O-acetyltransferase (392 aa).

An AB hydrolase-1 domain is found at 52 to 356 (NVVVVLHALT…ICGHDGFLVE (305 aa)). The Nucleophile role is filled by Ser-157. Arg-227 contacts substrate. Catalysis depends on residues Asp-320 and His-350. Asp-351 contributes to the substrate binding site. A disordered region spans residues 373–392 (SQSAGPGGAGPGSRKGTTRR).

Belongs to the AB hydrolase superfamily. MetX family. In terms of assembly, homodimer.

The protein localises to the cytoplasm. It catalyses the reaction L-homoserine + acetyl-CoA = O-acetyl-L-homoserine + CoA. It participates in amino-acid biosynthesis; L-methionine biosynthesis via de novo pathway; O-acetyl-L-homoserine from L-homoserine: step 1/1. Transfers an acetyl group from acetyl-CoA to L-homoserine, forming acetyl-L-homoserine. The chain is Homoserine O-acetyltransferase from Mycolicibacterium paratuberculosis (strain ATCC BAA-968 / K-10) (Mycobacterium paratuberculosis).